Reading from the N-terminus, the 430-residue chain is MTSVVVVGTQWGDEGKGKITDFLSADAEVIARYQGGDNAGHTIVIDGKKFKLHLIPSGIFFPQKISVIGNGVVVNPKSLVKELAYLHDEGVTTDNLRISDRAHVILPYHIQLDQLQEDAKGDNKIGTTIKGIGPAYMDKAARVGIRIADLLDKDIFAERLRINLAEKNRLFEKMYDSTPLDFDAIFEEYYAYGQEIKQYVTDTSVILNDALDAGKRVLFEGAQGVMLDIDQGTYPFVTSSNPVAGGVTIGSGVGPSKINKVVGVCKAYTSRVGDGPFPTELFDEVGERIREVGHEYGTTTGRPRRVGWFDSVVMRHSRRVSGITNLSLNSIDVLSGLDTVKICVAYDLDGKRIDYYPASLEQLKRCKPIYEELPGWQEDITGVRSLDELPENARNYVRRVGELVGVRISTFSVGPGREQTNILESVWASI.

GTP contacts are provided by residues 12 to 18 (GDEGKGK) and 40 to 42 (GHT). Catalysis depends on D13, which acts as the Proton acceptor. D13 and G40 together coordinate Mg(2+). IMP-binding positions include 13–16 (DEGK), 38–41 (NAGH), T128, R142, Q223, T238, and R302. Residue H41 is the Proton donor of the active site. A substrate-binding site is contributed by 298–304 (TTTGRPR). Residues R304, 330–332 (SID), and 412–414 (SVG) contribute to the GTP site.

The protein belongs to the adenylosuccinate synthetase family. In terms of assembly, homodimer. It depends on Mg(2+) as a cofactor.

Its subcellular location is the cytoplasm. It catalyses the reaction IMP + L-aspartate + GTP = N(6)-(1,2-dicarboxyethyl)-AMP + GDP + phosphate + 2 H(+). It functions in the pathway purine metabolism; AMP biosynthesis via de novo pathway; AMP from IMP: step 1/2. Its function is as follows. Plays an important role in the de novo pathway of purine nucleotide biosynthesis. Catalyzes the first committed step in the biosynthesis of AMP from IMP. This Streptococcus pyogenes serotype M2 (strain MGAS10270) protein is Adenylosuccinate synthetase.